A 136-amino-acid polypeptide reads, in one-letter code: MALYEHIFLARQDIAPQQVDELLSLYKSVIEAHGGKVGRVENWGLRPLAYRIRKNRKAYYVLINIDAPATAIAEVERQMHINEDILRYMTVRVEKHEKEKSAMFSRLDRNGHIGLDEERSRSSRRQREDVIEGVEL.

Over residues 117–130 (EERSRSSRRQREDV) the composition is skewed to basic and acidic residues. The tract at residues 117 to 136 (EERSRSSRRQREDVIEGVEL) is disordered.

The protein belongs to the bacterial ribosomal protein bS6 family.

Binds together with bS18 to 16S ribosomal RNA. This chain is Small ribosomal subunit protein bS6, found in Bartonella quintana (strain Toulouse) (Rochalimaea quintana).